A 106-amino-acid polypeptide reads, in one-letter code: Flagellar transcriptional regulator FlhD (106 aa).

Belongs to the FlhD family. Homodimer; disulfide-linked. Forms a heterohexamer composed of two FlhC and four FlhD subunits. Each FlhC binds a FlhD dimer, forming a heterotrimer, and a hexamer assembles by dimerization of two heterotrimers.

It localises to the cytoplasm. In terms of biological role, functions in complex with FlhC as a master transcriptional regulator that regulates transcription of several flagellar and non-flagellar operons by binding to their promoter region. Activates expression of class 2 flagellar genes, including fliA, which is a flagellum-specific sigma factor that turns on the class 3 genes. Also regulates genes whose products function in a variety of physiological pathways. This is Flagellar transcriptional regulator FlhD from Burkholderia mallei (strain SAVP1).